A 260-amino-acid polypeptide reads, in one-letter code: Proteasome subunit alpha (260 aa).

The protein belongs to the peptidase T1A family. As to quaternary structure, the 20S proteasome core is composed of 14 alpha and 14 beta subunits that assemble into four stacked heptameric rings, resulting in a barrel-shaped structure. The two inner rings, each composed of seven catalytic beta subunits, are sandwiched by two outer rings, each composed of seven alpha subunits. The catalytic chamber with the active sites is on the inside of the barrel. Has a gated structure, the ends of the cylinder being occluded by the N-termini of the alpha-subunits. Is capped at one or both ends by the proteasome regulatory ATPase, PAN.

The protein resides in the cytoplasm. The formation of the proteasomal ATPase PAN-20S proteasome complex, via the docking of the C-termini of PAN into the intersubunit pockets in the alpha-rings, triggers opening of the gate for substrate entry. Interconversion between the open-gate and close-gate conformations leads to a dynamic regulation of the 20S proteasome proteolysis activity. Component of the proteasome core, a large protease complex with broad specificity involved in protein degradation. This is Proteasome subunit alpha from Thermococcus kodakarensis (strain ATCC BAA-918 / JCM 12380 / KOD1) (Pyrococcus kodakaraensis (strain KOD1)).